Reading from the N-terminus, the 161-residue chain is Ubiquitin-conjugating enzyme E2Q-like protein 1 (161 aa).

A UBC core domain is found at 1–154 (MKELQDIARL…VKTHEKYGWV (154 aa)). The Glycyl thioester intermediate role is filled by cysteine 88.

The protein belongs to the ubiquitin-conjugating enzyme family. In terms of assembly, interacts with FBXW7.

The protein localises to the nucleus. The enzyme catalyses S-ubiquitinyl-[E1 ubiquitin-activating enzyme]-L-cysteine + [E2 ubiquitin-conjugating enzyme]-L-cysteine = [E1 ubiquitin-activating enzyme]-L-cysteine + S-ubiquitinyl-[E2 ubiquitin-conjugating enzyme]-L-cysteine.. It functions in the pathway protein modification; protein ubiquitination. Functionally, probable E2 ubiquitin-protein ligase that catalyzes the covalent attachment of ubiquitin to target proteins. May facilitate the monoubiquitination and degradation of MTOR and CCNE1 through interaction with FBXW7. This Mus musculus (Mouse) protein is Ubiquitin-conjugating enzyme E2Q-like protein 1 (Ube2ql1).